The sequence spans 384 residues: MQIMTSSSTSPTSPTSPLAAAADNGVAAAYFNFRGAERVPESHVWKGMHEKDTAPVAAADADGGDAVPVVDMSGGDDAAVAAVARAAEEWGGFLLVGHGVTAEALARVEAQAARLFALPADDKARGARRPGGGNTGYGVPPYLLRYPKQMWAEGYTFPPPAIRDEFRRVWPDAGDDYHRFCSAMEEYDSSMRALGERLLAMFFKALGLAGNDAPGGETERKIRETLTSTIHLNMFPRCPDPDRVVGLAAHTDSGFFTFILQSPVPGLQLLRHRPDRWVTVPGTPGALIVVVGDLFHVLTNGRFHSVFHRAVVNRERDRISMPYFLGPPADMKVTPLVAAGSPESKAVYQAVTWPEYMAVRDKLFGTNISALSMIRVAKEEDKES.

The region spanning 225 to 327 is the Fe2OG dioxygenase domain; sequence TLTSTIHLNM…RISMPYFLGP (103 aa). Fe cation-binding residues include His-250, Asp-252, and His-308. 2-oxoglutarate is bound by residues Arg-318 and Ser-320.

It belongs to the iron/ascorbate-dependent oxidoreductase family. L-ascorbate serves as cofactor. Fe(2+) is required as a cofactor. In terms of tissue distribution, expressed in unopened flowers.

The catalysed reaction is gibberellin A20 + 2-oxoglutarate + O2 = gibberellin A1 + succinate + CO2. The protein operates within plant hormone biosynthesis; gibberellin biosynthesis. Catalyzes the 3-beta-hydroxylation of the inactive gibberellin precursors, leading to the formation of bioactive gibberellins. In vitro, converts the precursors GA20, GA5, GA44 and GA9 to the corresponding 3-beta-hydroxylated bioactive products GA1, GA3, GA38 and GA4, respectively. Involved in the production of bioactive GA for vegetative growth and development. May possess 2,3-desaturase activity, catalyzing the conversion of GA9 to 2,3-dehydro-GA9, and GA20 to GA5 (2,3-dehydro GA20). May possess 2-beta-hydroxylase activity, catalyzing the conversion of GA1 and GA4 to the corresponding 2-beta-hydroxylated products GA8 and GA34, respectively. The polypeptide is Gibberellin 3-beta-dioxygenase 1 (Oryza sativa subsp. japonica (Rice)).